The chain runs to 82 residues: Small ribosomal subunit protein bS16 (82 aa).

Belongs to the bacterial ribosomal protein bS16 family.

The chain is Small ribosomal subunit protein bS16 from Shewanella sp. (strain MR-4).